A 366-amino-acid polypeptide reads, in one-letter code: S-adenosylmethionine:tRNA ribosyltransferase-isomerase (366 aa).

Belongs to the QueA family. As to quaternary structure, monomer.

It localises to the cytoplasm. The catalysed reaction is 7-aminomethyl-7-carbaguanosine(34) in tRNA + S-adenosyl-L-methionine = epoxyqueuosine(34) in tRNA + adenine + L-methionine + 2 H(+). It functions in the pathway tRNA modification; tRNA-queuosine biosynthesis. Functionally, transfers and isomerizes the ribose moiety from AdoMet to the 7-aminomethyl group of 7-deazaguanine (preQ1-tRNA) to give epoxyqueuosine (oQ-tRNA). This chain is S-adenosylmethionine:tRNA ribosyltransferase-isomerase, found in Synechococcus sp. (strain CC9605).